Reading from the N-terminus, the 139-residue chain is HTH-type transcriptional regulator MntR (139 aa).

Residues 1–63 enclose the HTH dtxR-type domain; it reads MPTPSMEDHI…YEKYRGLTLT (63 aa). Residues D8, E11, H77, E99, E102, and H103 each contribute to the Mn(2+) site.

Belongs to the DtxR/MntR family. As to quaternary structure, homodimer.

Its subcellular location is the cytoplasm. Its activity is regulated as follows. DNA binding is strongly activated by Mn(2+). Functionally, central regulator of manganese homeostasis. The polypeptide is HTH-type transcriptional regulator MntR (Lysinibacillus sphaericus (strain C3-41)).